The sequence spans 353 residues: F-box protein At3g58530 (353 aa).

Residues 8–56 (EEEEETWRREIVTSVMRLVSTRLPQTDLISLLLVSPWLYRTLISYPSIW) enclose the F-box; degenerate domain.

The protein is F-box protein At3g58530 of Arabidopsis thaliana (Mouse-ear cress).